An 894-amino-acid polypeptide reads, in one-letter code: Protein translocase subunit SecA (894 aa).

ATP is bound by residues Q87, 105 to 109, and D512; that span reads GEGKT. A disordered region spans residues 836–870; that stretch reads EVEQAERERQAHAEQESSHYHAEGEGQDFSDLHIG. C875, C877, C886, and H887 together coordinate Zn(2+).

The protein belongs to the SecA family. Monomer and homodimer. Part of the essential Sec protein translocation apparatus which comprises SecA, SecYEG and auxiliary proteins SecDF-YajC and YidC. Requires Zn(2+) as cofactor.

The protein localises to the cell inner membrane. Its subcellular location is the cytoplasm. The enzyme catalyses ATP + H2O + cellular proteinSide 1 = ADP + phosphate + cellular proteinSide 2.. In terms of biological role, part of the Sec protein translocase complex. Interacts with the SecYEG preprotein conducting channel. Has a central role in coupling the hydrolysis of ATP to the transfer of proteins into and across the cell membrane, serving both as a receptor for the preprotein-SecB complex and as an ATP-driven molecular motor driving the stepwise translocation of polypeptide chains across the membrane. This is Protein translocase subunit SecA from Glaesserella parasuis serovar 5 (strain SH0165) (Haemophilus parasuis).